The following is a 347-amino-acid chain: MGPMSSSTEDRRFEVLRAIVADYVATKEPIGSKTLVERHNLGVSSATVRNDMAVLEAEGYITQPHTSSGRIPTDKGYRQFVDRISEVKPLSAAERRAILQFLESGVDLDDVLRRGVRLLAQLTRQVAVVQYPTVSASTVRHIEVVALNPARLLLVVITDTGRVDQRIVELGAVVDDDDLSALRALLGAAMDGKRLAAASAAVAELPESAPQQLRDVLIRVSTVLVETLVEHPEERLVLGGTANLTRNAADFGLPGSLRQVLEALEEQVVVLKLLAAAQQPGTVTVRIGEETQVEEMRSASVVTTGYGVSGSVLGGMGVLGPTRMDYPGTIASVATVARYIGEVLAER.

The protein belongs to the HrcA family.

Its function is as follows. Negative regulator of class I heat shock genes (grpE-dnaK-dnaJ and groELS operons). Prevents heat-shock induction of these operons. This chain is Heat-inducible transcription repressor HrcA, found in Nocardia farcinica (strain IFM 10152).